We begin with the raw amino-acid sequence, 297 residues long: Undecaprenyl-diphosphatase (297 aa).

A run of 7 helical transmembrane segments spans residues P58–F78, A103–I123, L138–L158, L168–V188, A208–L228, V243–L263, and F274–L294.

The protein belongs to the UppP family.

Its subcellular location is the cell inner membrane. The enzyme catalyses di-trans,octa-cis-undecaprenyl diphosphate + H2O = di-trans,octa-cis-undecaprenyl phosphate + phosphate + H(+). Catalyzes the dephosphorylation of undecaprenyl diphosphate (UPP). Confers resistance to bacitracin. In Synechococcus sp. (strain ATCC 27144 / PCC 6301 / SAUG 1402/1) (Anacystis nidulans), this protein is Undecaprenyl-diphosphatase.